The primary structure comprises 962 residues: Protease 3 (962 aa).

Positions 1–23 are cleaved as a signal peptide; that stretch reads MPRSTWFKALLLLVALWGPAVQA. H88 contributes to the Zn(2+) binding site. E91 acts as the Proton acceptor in catalysis. Residues H92 and E169 each contribute to the Zn(2+) site.

It belongs to the peptidase M16 family. As to quaternary structure, monomer. Zn(2+) serves as cofactor.

The protein localises to the periplasm. It catalyses the reaction Preferential cleavage of 16-Tyr-|-Leu-17 and 25-Phe-|-Tyr-26 bonds of oxidized insulin B chain. Also acts on other substrates of Mw less than 7 kDa such as insulin and glucagon.. Endopeptidase that degrades small peptides of less than 7 kDa, such as glucagon and insulin. This is Protease 3 (ptrA) from Salmonella typhimurium (strain LT2 / SGSC1412 / ATCC 700720).